The primary structure comprises 23 residues: Magainin-B2 (23 aa).

In terms of tissue distribution, expressed by the skin glands.

Its subcellular location is the secreted. Its function is as follows. Has antimicrobial activity against Gram-negative bacterium E.coli ATCC 25922 (MIC=50 uM) and against fungus C.albicans ATCC 90028 (MIC=100 uM). Has no hemolytic activity against human erythrocytes even at high concentrations. The sequence is that of Magainin-B2 from Xenopus borealis (Kenyan clawed frog).